Consider the following 4334-residue polypeptide: Cytoplasmic dynein 2 heavy chain 1 (4334 aa).

The interval 1 to 1704 (MSSDSRKTFV…KVAMAEATFD (1704 aa)) is stem. 150–157 (LGTAVRKG) is a binding site for ATP. Residues 1026–1097 (QEAKGLTAKL…AHLEEQKGNL (72 aa)) adopt a coiled-coil conformation. AAA stretches follow at residues 1705–1929 (YTWE…VLGI), 1996–2211 (KALA…KAFQ), 2299–2544 (GMDE…WING), and 2641–2882 (GYER…SSGS). ATP is bound by residues 1743–1750 (GPAGTGKT), 2034–2041 (GPSGSGKS), 2334–2341 (GPEGCGKG), and 2679–2686 (GNSGVGRR). Positions 2897–3185 (QIYNRKRTQV…ISVDKAESVL (289 aa)) are stalk. 2 coiled-coil regions span residues 2930-2998 (LSAE…SEVQ) and 3120-3199 (ERVS…RGEK). AAA regions lie at residues 3260–3492 (LSSE…TVEK) and 3701–3917 (MSSF…VITL).

It belongs to the dynein heavy chain family. As to quaternary structure, the cytoplasmic dynein complex 2 is probably composed by a DHC1B homodimer and a number of D1BLIC light intermediate chains. Interacts with FAP133, FLA10 and LC8.

Its subcellular location is the cytoplasm. The protein resides in the cytoskeleton. The protein localises to the flagellum basal body. It localises to the cell projection. It is found in the cilium. Its subcellular location is the flagellum membrane. May function as a motor for intraflagellar retrograde transport. Functions in flagellar biogenesis. In Chlamydomonas reinhardtii (Chlamydomonas smithii), this protein is Cytoplasmic dynein 2 heavy chain 1 (DHC1B).